A 332-amino-acid chain; its full sequence is MSLKDHLIHNVHKEEHAHAHNKISVVGVGAVGMACAISILMKDLADELTLVDVVEDKLKGEMLDLQHGSLFLKTPKIISGKDYSVTAHSKLVIVTAGARQQEGESRLNLVQRNVNIFKFIIPNVVKYSPDCKLLIVSNPVDILTYVAWKISGFPKHRVIGSGCNLDSARFRHLMGERLGIHPLSCHGWIVGEHGDSSVPVWSGVNVAGVSLKALHPDMGTDADKEHWKEVHKQVVDSAYEVIKLKGYTSWAIGLSVADLAETIMKNLRRVHPISTAVKGMHGIKDDVFLSVPCVLGSSGITDVVKMILKPDEEEKIKKSADTLWGIQKELQF.

Residues 29–57 and R99 each bind NAD(+); that span reads GAVG…VEDK. Residues R106, N138, and R169 each contribute to the substrate site. Residue N138 coordinates NAD(+). H193 functions as the Proton acceptor in the catalytic mechanism. T248 contacts substrate.

The protein belongs to the LDH/MDH superfamily. LDH family. Homotetramer.

The protein localises to the cytoplasm. The catalysed reaction is (S)-lactate + NAD(+) = pyruvate + NADH + H(+). It functions in the pathway fermentation; pyruvate fermentation to lactate; (S)-lactate from pyruvate: step 1/1. In terms of biological role, interconverts simultaneously and stereospecifically pyruvate and lactate with concomitant interconversion of NADH and NAD(+). This Gallus gallus (Chicken) protein is L-lactate dehydrogenase A chain (LDHA).